The primary structure comprises 189 residues: Probable nicotinate-nucleotide adenylyltransferase (189 aa).

Belongs to the NadD family.

The catalysed reaction is nicotinate beta-D-ribonucleotide + ATP + H(+) = deamido-NAD(+) + diphosphate. Its pathway is cofactor biosynthesis; NAD(+) biosynthesis; deamido-NAD(+) from nicotinate D-ribonucleotide: step 1/1. Catalyzes the reversible adenylation of nicotinate mononucleotide (NaMN) to nicotinic acid adenine dinucleotide (NaAD). The chain is Probable nicotinate-nucleotide adenylyltransferase from Bacillus cereus (strain G9842).